An 812-amino-acid polypeptide reads, in one-letter code: MKEFPKNYNFTENEKKWQQIWQEKQIYAYNPNVAKEETYVIDTPPPTVSGQLHIGHVYSYTQTDFIVRFQRMMGKNIFYPMGFDDNGLPTERLVEKQKQIKAYNMERSEFIKICEEVVESEEEKFRSLFNQIALSVDWSLEYQTISPLSRKISQMSFLDLVQKEEIYRTNQPILWDPVDGTALAQADIEDKEQTSFMNYITFKTEQGDPLTIATTRPELLPACVAVFYHPDDGRYKHLAGKSAITPLFNEQVPLLADPLVRQDKGTGLVMCCTFGDQTDITWWKTHNLPLKTIITKKGTIDCQHETSIDGLKIKEARTKIIAILKEQELLIKQEDITHTVKCAERSGAPLEILTVPQWFVKTISHKEELLKRANELNWHPKNMKIRLENWINAISWDWCISRQRYFGVPFPVWYSKRVGEEGKILYADITQLPIDPLKDLPMGYSKEEVEPDYDVMDTWATSSVSPQLSTHGISDDFAVNKDRHDKLFPMDLRPQAHEIIRTWAFYTILKAHLHQNTLPWKNIMISGWCLAEDRSKMSKSKGNVLVPEKLLEQYGSDVIRYWSANSKLGADTAYSEDVMKNGKRLVNKLWSAAKFVFIHFDKLKGEDKKASLLDIKEKITNEFDKWMVNKLVELVKLATNELQNYEYANAMHLTEKFFWVVFCDNYLEISKTRSYDEEHKNPQGQYSSILTLYHVMQTLLKLFAPFMPHITEELYQILYSENSIHVKGSWVNYSDLNYEINAKGAEGLLEILDIVRKFKAEKNLSIKAPIKLLEVSGIVLSAELAEDLKNVTSADEIQFEMKDDKIKVNIIL.

Residues 46–56 (PTVSGQLHIGH) carry the 'HIGH' region motif. The 'KMSKS' region motif lies at 536–540 (KMSKS). Lysine 539 serves as a coordination point for ATP.

This sequence belongs to the class-I aminoacyl-tRNA synthetase family. ValS type 2 subfamily. In terms of assembly, monomer.

It is found in the cytoplasm. The catalysed reaction is tRNA(Val) + L-valine + ATP = L-valyl-tRNA(Val) + AMP + diphosphate. Functionally, catalyzes the attachment of valine to tRNA(Val). As ValRS can inadvertently accommodate and process structurally similar amino acids such as threonine, to avoid such errors, it has a 'posttransfer' editing activity that hydrolyzes mischarged Thr-tRNA(Val) in a tRNA-dependent manner. In Rickettsia rickettsii (strain Iowa), this protein is Valine--tRNA ligase.